The chain runs to 104 residues: Gastrin (104 aa).

Positions 1-21 (MPRLCVCMLVLVLALATFSEA) are cleaved as a signal peptide. Positions 22 to 58 (SWKPRSQLQDASSGPRTNGALEQHQLEKLGPASHHRR) are excised as a propeptide. Residues 23–104 (WKPRSQLQDA…RSAEEEDQYN (82 aa)) form a disordered region. A compositionally biased stretch (polar residues) spans 25 to 37 (PRSQLQDASSGPR). Residue Y87 is modified to Sulfotyrosine. Residue F92 is modified to Phenylalanine amide. S96 carries the post-translational modification Phosphoserine. Positions 96-104 (SAEEEDQYN) are excised as a propeptide. A Sulfotyrosine modification is found at Y103.

It belongs to the gastrin/cholecystokinin family. In terms of processing, sulfation on Tyr-87 enhances proteolytic processing, and blocks peptide degradation. Levels of sulfation differ between proteolytically-cleaved gastrins and between tissues.

It is found in the secreted. In terms of biological role, gastrin stimulates the stomach mucosa to produce and secrete hydrochloric acid and the pancreas to secrete its digestive enzymes. It also stimulates smooth muscle contraction and increases blood circulation and water secretion in the stomach and intestine. This chain is Gastrin (Gast), found in Rattus norvegicus (Rat).